The primary structure comprises 526 residues: Lysine--tRNA ligase (526 aa).

E431 and E438 together coordinate Mg(2+).

Belongs to the class-II aminoacyl-tRNA synthetase family. Homodimer. Requires Mg(2+) as cofactor.

The protein localises to the cytoplasm. The enzyme catalyses tRNA(Lys) + L-lysine + ATP = L-lysyl-tRNA(Lys) + AMP + diphosphate. The sequence is that of Lysine--tRNA ligase from Chlamydia felis (strain Fe/C-56) (Chlamydophila felis).